A 177-amino-acid polypeptide reads, in one-letter code: Large ribosomal subunit protein uL16m (177 aa).

It belongs to the universal ribosomal protein uL16 family.

It localises to the mitochondrion. The protein is Large ribosomal subunit protein uL16m (RPL16) of Brassica napus (Rape).